The primary structure comprises 689 residues: Glycine--tRNA ligase beta subunit (689 aa).

This sequence belongs to the class-II aminoacyl-tRNA synthetase family. In terms of assembly, tetramer of two alpha and two beta subunits.

It is found in the cytoplasm. It catalyses the reaction tRNA(Gly) + glycine + ATP = glycyl-tRNA(Gly) + AMP + diphosphate. The protein is Glycine--tRNA ligase beta subunit of Actinobacillus succinogenes (strain ATCC 55618 / DSM 22257 / CCUG 43843 / 130Z).